Reading from the N-terminus, the 839-residue chain is MNHLEGSAEVEVADEAPGGEVNESVEADLEHPEVEEEQQPSPPPPAGHAPEDHRAHPAPPPPPPPQEEEEERGECLARSASTESGFHNHTDTAEGDVLAAARDGYEAERAQDADDESAYAVQYRPEAEEYTEQAEAEHAEAAQRRALPNHLHFHSLEHEEAMNAAYSGYVYTHRLFHRAEDEPYAEPYADYGGLQEHVYEEIGDAPELEARDGLRLYERERDEAAAYRQEALGARLHHYDERSDGESDSPEKEAEFAPYPRMDSYEQEEDIDQIVAEVKQSMSSQSLDKAAEDMPEAEQDLERAPTPGGGHPDSPGLPAPAGQQQRVVGTPGGSEVGQRYSKEKRDAISLAIKDIKEAIEEVKTRTIRSPYTPDEPKEPIWVMRQDISPTRDCDDQRPVDGDSPSPGSSSPLGAESSITPLHPGDPTEASTNKESRKSLASFPTYVEVPGPCDPEDLIDGIIFAANYLGSTQLLSDKTPSKNVRMMQAQEAVSRIKTAQKLAKSRKKAPEGESQPMTEVDLFISTQRIKVLNADTQEPMMDHPLRTISYIADIGNIVVLMARRRMPRSNSQENVEASHPSQDAKRQYKMICHVFESEDAQLIAQSIGQAFSVAYQEFLRANGINPEDLSQKEYSDLLNTQDMYNDDLIHFSKSENCKDVFIEKQKGEILGVVIVESGWGSILPTVIIANMMHGGPAEKSGKLNIGDQIMSINGTSLVGLPLSTCQSIIKGLKNQSRVKLNIVRCPPVTTVLIRRPDLRYQLGFSVQNGIICSLMRGGIAERGGVRVGHRIIEINGQSVVATPHEKIVHILSNAVGEIHMKTMPAAMYRLLTAQEQPVYI.

3 disordered regions span residues 1 to 118, 235 to 346, and 362 to 437; these read MNHL…DESA, RLHH…EKRD, and VKTR…ESRK. Over residues 23 to 38 the composition is skewed to acidic residues; sequence ESVEADLEHPEVEEEQ. Residue S79 is modified to Phosphoserine. 2 stretches are compositionally biased toward basic and acidic residues: residues 103 to 112 and 237 to 255; these read DGYEAERAQD and HHYD…KEAE. Positions 227–315 are munc-18-1 binding; the sequence is YRQEALGARL…TPGGGHPDSP (89 aa). S243, S247, S249, S264, S281, and S286 each carry phosphoserine. T306 is modified (phosphothreonine). A phosphoserine mark is found at S314 and S369. T372 bears the Phosphothreonine mark. Residues 375–438 form an LIN-2/CASK binding region; the sequence is EPKEPIWVMR…ASTNKESRKS (64 aa). A compositionally biased stretch (basic and acidic residues) spans 389-400; that stretch reads PTRDCDDQRPVD. Over residues 401 to 417 the composition is skewed to low complexity; sequence GDSPSPGSSSPLGAESS. 4 positions are modified to phosphoserine: S403, S405, S410, and S570. The PID domain maps to 459 to 645; sequence DGIIFAANYL…LLNTQDMYND (187 aa). Residues 628-643 form an autoinhibitory helix linker region; it reads LSQKEYSDLLNTQDMY. PDZ domains lie at 658 to 744 and 749 to 824; these read DVFI…IVRC and TVLI…TMPA.

In terms of assembly, part of a multimeric complex containing STXBP1 and STX1A. Interacts with STXBP1. Component of the brain-specific heterotrimeric complex (LIN-10-LIN-2-LIN-7 complex) composed of at least APBA1, CASK, and LIN7, which associates with the motor protein KIF17 to transport vesicles along microtubules. Within the complex, interacts (via PDZ domain) with the motor protein KIF17; the interaction is direct and is required for association of KIF17 with the cargo that is to be transported. Binds to the cytoplasmic domain of amyloid protein (APP). Interacts (via PDZ 1 and 2 domains) with FSPB. Isoform 2 interacts (via its truncated PID domain) with active, GTP-bound RAB6A and RAB6B. Brain. Detected in the cerebellum, hippocampus, olfactory system, piriform and entorhinal cortex, supraoptic nucleus of the hypothalamus, substantia nigra, and other mesencephalic areas.

It is found in the cytoplasm. It localises to the perinuclear region. Its subcellular location is the nucleus. The protein localises to the golgi apparatus. Functionally, putative function in synaptic vesicle exocytosis by binding to Munc18-1, an essential component of the synaptic vesicle exocytotic machinery. May modulate processing of the amyloid-beta precursor protein (APP) and hence formation of APP-beta. The polypeptide is Amyloid-beta A4 precursor protein-binding family A member 1 (Apba1) (Rattus norvegicus (Rat)).